The sequence spans 323 residues: MPQNPSDRRPAPRDNPGTNAYEPLLSAEVRAALSTGLPVVALESTIIAHGLPRPRNLSVARELEGLVRSAGAVPATVAVLDGRARIGLDGDQLERVAGDPAVRKLGHRDLAPALAAGADGATTVSATAFLAARAGIGVFATGGLGGVHREWAENQDESADLRLLARTGITVVCAGVKSILDVPATLQRLETLGVPVVGYGTGHFPGFYLSSSGEPVDWTVHSPEEVAEVIRAREALGGPVGALIVANPVAERDQLDPVLHDRVLAQALDACRERGISGQGVTPFLLDQLTRRTEGASLEANLAAVRGNVTLAARIAVAAADAR.

Glutamate 43 functions as the Proton donor in the catalytic mechanism. Lysine 104 and valine 124 together coordinate substrate. Mn(2+) is bound at residue aspartate 156. A substrate-binding site is contributed by 158-160; that stretch reads SAD. Residue lysine 177 is the Nucleophile of the active site.

This sequence belongs to the pseudouridine-5'-phosphate glycosidase family. In terms of assembly, homotrimer. The cofactor is Mn(2+).

It carries out the reaction D-ribose 5-phosphate + uracil = psi-UMP + H2O. Its function is as follows. Catalyzes the reversible cleavage of pseudouridine 5'-phosphate (PsiMP) to ribose 5-phosphate and uracil. Functions biologically in the cleavage direction, as part of a pseudouridine degradation pathway. The protein is Pseudouridine-5'-phosphate glycosidase of Streptomyces griseus subsp. griseus (strain JCM 4626 / CBS 651.72 / NBRC 13350 / KCC S-0626 / ISP 5235).